We begin with the raw amino-acid sequence, 292 residues long: Elongation factor Ts (292 aa).

Residues 79–82 (TDFV) are involved in Mg(2+) ion dislocation from EF-Tu.

Belongs to the EF-Ts family.

The protein localises to the cytoplasm. In terms of biological role, associates with the EF-Tu.GDP complex and induces the exchange of GDP to GTP. It remains bound to the aminoacyl-tRNA.EF-Tu.GTP complex up to the GTP hydrolysis stage on the ribosome. In Xanthomonas euvesicatoria pv. vesicatoria (strain 85-10) (Xanthomonas campestris pv. vesicatoria), this protein is Elongation factor Ts.